The following is a 235-amino-acid chain: Zein-alpha ZG99 (235 aa).

A signal peptide spans 1-21; the sequence is MAAKIFCLIMLLGLSASAATA.

Belongs to the zein family.

In terms of biological role, zeins are major seed storage proteins. This Zea mays (Maize) protein is Zein-alpha ZG99.